Consider the following 251-residue polypeptide: Probable transcriptional regulatory protein SYO3AOP1_0685 (251 aa).

Belongs to the TACO1 family.

It localises to the cytoplasm. The protein is Probable transcriptional regulatory protein SYO3AOP1_0685 of Sulfurihydrogenibium sp. (strain YO3AOP1).